The sequence spans 244 residues: Small ribosomal subunit protein uS2 (244 aa).

The protein belongs to the universal ribosomal protein uS2 family.

This chain is Small ribosomal subunit protein uS2, found in Endomicrobium trichonymphae.